The sequence spans 152 residues: NAD(P)H-quinone oxidoreductase subunit N (152 aa).

The protein belongs to the complex I NdhN subunit family. In terms of assembly, NDH-1 can be composed of about 15 different subunits; different subcomplexes with different compositions have been identified which probably have different functions.

The protein resides in the cellular thylakoid membrane. It carries out the reaction a plastoquinone + NADH + (n+1) H(+)(in) = a plastoquinol + NAD(+) + n H(+)(out). The enzyme catalyses a plastoquinone + NADPH + (n+1) H(+)(in) = a plastoquinol + NADP(+) + n H(+)(out). Its function is as follows. NDH-1 shuttles electrons from an unknown electron donor, via FMN and iron-sulfur (Fe-S) centers, to quinones in the respiratory and/or the photosynthetic chain. The immediate electron acceptor for the enzyme in this species is believed to be plastoquinone. Couples the redox reaction to proton translocation, and thus conserves the redox energy in a proton gradient. Cyanobacterial NDH-1 also plays a role in inorganic carbon-concentration. The protein is NAD(P)H-quinone oxidoreductase subunit N of Prochlorococcus marinus (strain SARG / CCMP1375 / SS120).